The primary structure comprises 847 residues: Zinc transporter ZIP10 (847 aa).

The signal sequence occupies residues 1-26 (MMRVHTHTRLCFLCVLTLLYHQCSHC). A disordered region spans residues 136 to 374 (GRHSHSAGHP…RREVPGSPAH (239 aa)). Residues 162 to 171 (HHENEEHTLA) show a composition bias toward basic and acidic residues. Over residues 179 to 188 (TLGTGATPPS) the composition is skewed to polar residues. Residues 190–269 (SEEHDHDHEH…QEHNDLSDQN (80 aa)) show a composition bias toward basic and acidic residues. Composition is skewed to basic residues over residues 270–285 (HHHHDHHHHKHPHPHL) and 314–330 (TRRHRRPSKVKAHRGRN). Residue Asn385 is glycosylated (N-linked (GlcNAc...) asparagine). 3 helical membrane-spanning segments follow: residues 447–467 (FVSITIISLLSLLGVVLVPIL), 474–494 (FLLTFLVALAVGTLSGDALLH), and 529–549 (GLTALAGIYLLFIIEHCIGMF). Residues 613 to 676 (ELQPLDSPSK…HSHHGHCHSD (64 aa)) form a disordered region. Residues 629–646 (DSDHPYEAPVKTEEDNVP) are compositionally biased toward basic and acidic residues. Residues 648–672 (AKSKKHGHGHGHGHGHGHGHSHHGH) show a composition bias toward basic residues. Helical transmembrane passes span 705 to 725 (AIGAAFSANITGGISTSVAVF), 750 to 770 (IVYNLLSALMAYAGMVIGTAV), 779 to 799 (SWIFAVTAGMFLYVALVDMLP), and 817 to 837 (FVLQNFGMLTGFGIMLLIAIF).

It belongs to the ZIP transporter (TC 2.A.5) family. Post-translationally, undergoes N-terminal ectodomain shedding.

Its subcellular location is the cell membrane. It is found in the apical cell membrane. It carries out the reaction Zn(2+)(in) = Zn(2+)(out). Its function is as follows. Zinc-influx transporter. When associated with slc39a6, the heterodimer slc39a10/slc39a6 has a functional role in epithelial-mesenchymal transition (EMT) during embryonic development. Slc39a10/slc39a6 heterodimers play also an essentiel role in initiating mitosis by importing zinc into cells to initiate a pathway resulting in the onset of mitosis. When associated with slc39a6, the heterodimer controls Ncam1 phosphorylation and integration into focal adhesion complexes during EMT. This is Zinc transporter ZIP10 from Danio rerio (Zebrafish).